A 493-amino-acid chain; its full sequence is Probable malate:quinone oxidoreductase (493 aa).

It belongs to the MQO family. Requires FAD as cofactor.

It carries out the reaction (S)-malate + a quinone = a quinol + oxaloacetate. It functions in the pathway carbohydrate metabolism; tricarboxylic acid cycle; oxaloacetate from (S)-malate (quinone route): step 1/1. In Mycobacterium tuberculosis (strain ATCC 25177 / H37Ra), this protein is Probable malate:quinone oxidoreductase.